Consider the following 351-residue polypeptide: uncharacterized protein (351 aa).

The Mn(2+) site is built by aspartate 215, aspartate 226, histidine 290, glutamate 319, and glutamate 333.

The protein belongs to the peptidase M24B family. Requires Mn(2+) as cofactor.

This is an uncharacterized protein from Staphylococcus haemolyticus (strain JCSC1435).